The primary structure comprises 73 residues: Conotoxin CnIIIF (73 aa).

The first 19 residues, 1 to 19 (MSKLGVLLTICLLLFPLTA), serve as a signal peptide directing secretion. A propeptide spanning residues 20–51 (LPMDGDQSVDRPAERMQDDISSGQHPLFNQKR) is cleaved from the precursor. Disulfide bonds link Cys-53/Cys-72, Cys-54/Cys-70, and Cys-60/Cys-73.

The protein belongs to the conotoxin M superfamily. Expressed by the venom duct.

Its subcellular location is the secreted. Functionally, shows a paralytic effect in fish. This is Conotoxin CnIIIF from Conus consors (Singed cone).